A 151-amino-acid polypeptide reads, in one-letter code: MSDWDTNTIIGSRARAGGSGPRANVARSQGQINAARRQGLVVSVDKKYGSTNTRGDNEGQRLTKVDRETDIVKPKKLDPNVGRAISRARTDKKMSQKDLATKINEKPTVVNDYEAARAIPNQQVLSKLERALGVKLRGNNIGSPLGAPKKK.

Disordered stretches follow at residues 1-29 and 78-98; these read MSDWDTNTIIGSRARAGGSGPRANVARSQ and DPNVGRAISRARTDKKMSQKD. The tract at residues 41–119 is essential for TBP-binding; that stretch reads VVSVDKKYGS…VNDYEAARAI (79 aa). Residues 85–139 form the HTH cro/C1-type domain; sequence ISRARTDKKMSQKDLATKINEKPTVVNDYEAARAIPNQQVLSKLERALGVKLRGN. The span at 88 to 98 shows a compositional bias: basic and acidic residues; sequence ARTDKKMSQKD. A DNA-binding region (H-T-H motif) is located at residues 96–115; the sequence is QKDLATKINEKPTVVNDYEA. Residue Ser143 is modified to Phosphoserine.

Belongs to the MBF1 family. Interacts with TBP and the transcription factor GCN4. Interacts with RPS3/us3.

It is found in the cytoplasm. Its subcellular location is the nucleus. Functionally, transcriptional coactivator that stimulates GCN4-dependent transcriptional activity by bridging the DNA-binding region of GCN4 and TBP (SPT15), thereby recruiting TBP to GCN4-bound promoters. Involved in induction of the ribosome quality control (RQC) pathway; a pathway that degrades nascent peptide chains during problematic translation. Required to prevent stalled ribosomes from frameshifting. The polypeptide is Multiprotein-bridging factor 1 (MBF1) (Saccharomyces cerevisiae (strain ATCC 204508 / S288c) (Baker's yeast)).